Here is a 555-residue protein sequence, read N- to C-terminus: Urocanate hydratase (555 aa).

NAD(+) is bound by residues 51-52, Gln129, 175-177, Glu195, Arg200, 241-242, 262-266, 272-273, and Tyr321; these read GG, GMG, NA, QTSAH, and YL. The active site involves Cys409. Gly491 provides a ligand contact to NAD(+).

The protein belongs to the urocanase family. The cofactor is NAD(+).

It is found in the cytoplasm. The enzyme catalyses 4-imidazolone-5-propanoate = trans-urocanate + H2O. Its pathway is amino-acid degradation; L-histidine degradation into L-glutamate; N-formimidoyl-L-glutamate from L-histidine: step 2/3. Its function is as follows. Catalyzes the conversion of urocanate to 4-imidazolone-5-propionate. The protein is Urocanate hydratase of Rhizorhabdus wittichii (strain DSM 6014 / CCUG 31198 / JCM 15750 / NBRC 105917 / EY 4224 / RW1) (Sphingomonas wittichii).